The primary structure comprises 134 residues: Putative toxin MJ0605 (134 aa).

The protein belongs to the UPF0332 family.

Functionally, putative toxin component of a putative type VII toxin-antitoxin (TA) system. Its cognate antitoxin might be MJ0604. The chain is Putative toxin MJ0605 from Methanocaldococcus jannaschii (strain ATCC 43067 / DSM 2661 / JAL-1 / JCM 10045 / NBRC 100440) (Methanococcus jannaschii).